A 79-amino-acid chain; its full sequence is Large ribosomal subunit protein bL31 (79 aa).

C16, C18, C37, and C40 together coordinate Zn(2+).

Belongs to the bacterial ribosomal protein bL31 family. Type A subfamily. As to quaternary structure, part of the 50S ribosomal subunit. It depends on Zn(2+) as a cofactor.

In terms of biological role, binds the 23S rRNA. The protein is Large ribosomal subunit protein bL31 of Coxiella burnetii (strain CbuG_Q212) (Coxiella burnetii (strain Q212)).